The sequence spans 982 residues: Dual specificity protein kinase Ttk (982 aa).

Disordered regions lie at residues 178 to 204 (LSHE…DGTC), 211 to 230 (TFLH…PVWR), and 493 to 574 (AEHQ…PLRL). Residues 211–223 (TFLHSDQKFSPQE) are compositionally biased toward polar residues. Positions 510–533 (MKREENPVKAPEDHQKPFSKETSS) are enriched in basic and acidic residues. The 264-residue stretch at 653 to 916 (FFIFKMIGRG…IAELLDHPYL (264 aa)) folds into the Protein kinase domain. Residues 659 to 667 (IGRGGSSKV) and Lys681 contribute to the ATP site. Catalysis depends on Asp775, which acts as the Proton acceptor.

It belongs to the protein kinase superfamily. Ser/Thr protein kinase family. It depends on Mg(2+) as a cofactor. Barely detectable in adult somatic tissues. Expressed in immature germ cells that have not completed meiosis. In ovary, expressed predominantly in previtellogenic oocytes. In testis, expressed in primary and secondary spermatocytes, but not mature spermatozoa.

It carries out the reaction L-seryl-[protein] + ATP = O-phospho-L-seryl-[protein] + ADP + H(+). The catalysed reaction is L-threonyl-[protein] + ATP = O-phospho-L-threonyl-[protein] + ADP + H(+). The enzyme catalyses L-tyrosyl-[protein] + ATP = O-phospho-L-tyrosyl-[protein] + ADP + H(+). In terms of biological role, involved in mitotic spindle assembly checkpoint signaling, a process that delays anaphase until chromosomes are bioriented on the spindle, and in the repair of incorrect mitotic kinetochore-spindle microtubule attachments. Required to prevent chromosome segregation errors during meiosis. Required for fin and heart regeneration. This is Dual specificity protein kinase Ttk (ttk) from Danio rerio (Zebrafish).